The chain runs to 145 residues: Protein H2A.5 (145 aa).

Residues 118-145 (SPAAAEKEAKSQKAAAKSPKKKTAATKE) form a disordered region. An SPKK motif motif is present at residues 135–138 (SPKK). Positions 135-145 (SPKKKTAATKE) are enriched in basic residues.

It belongs to the histone H2A family. As to quaternary structure, the nucleosome is a histone octamer containing two molecules each of H2A, H2B, H3 and H4 assembled in one H3-H4 heterotetramer and two H2A-H2B heterodimers. The octamer wraps approximately 147 bp of DNA. Abundant in meristematic tissues.

It localises to the nucleus. The protein localises to the chromosome. Functionally, core component of nucleosome. Nucleosomes wrap and compact DNA into chromatin, limiting DNA accessibility to the cellular machineries which require DNA as a template. Histones thereby play a central role in transcription regulation, DNA repair, DNA replication and chromosomal stability. DNA accessibility is regulated via a complex set of post-translational modifications of histones, also called histone code, and nucleosome remodeling. This Triticum aestivum (Wheat) protein is Protein H2A.5 (H2A-2).